The sequence spans 952 residues: Plasma membrane ATPase 4 (952 aa).

The Cytoplasmic segment spans residues M1 to F64. A helical transmembrane segment spans residues L65–I84. The Extracellular segment spans residues A85–W96. A helical transmembrane segment spans residues Q97–E117. At N118–I246 the chain is on the cytoplasmic side. The chain crosses the membrane as a helical span at residues G247–P267. The Extracellular portion of the chain corresponds to I268–I277. The chain crosses the membrane as a helical span at residues D278–T299. The Cytoplasmic portion of the chain corresponds to M300 to K646. D332 serves as the catalytic 4-aspartylphosphate intermediate. 2 residues coordinate Mg(2+): D591 and D595. A helical transmembrane segment spans residues N647 to L668. Residues I669 to D673 lie on the Extracellular side of the membrane. The chain crosses the membrane as a helical span at residues F674–D696. Topologically, residues R697–I712 are cytoplasmic. A helical membrane pass occupies residues F713 to A733. The Extracellular segment spans residues M734–E754. The helical transmembrane segment at E755–T775 threads the bilayer. The Cytoplasmic portion of the chain corresponds to R776–G787. The chain crosses the membrane as a helical span at residues M788–A808. Over N809–G817 the chain is Extracellular. Residues C818–D838 traverse the membrane as a helical segment. The Cytoplasmic segment spans residues I839 to V952.

Belongs to the cation transport ATPase (P-type) (TC 3.A.3) family. Type IIIA subfamily. In terms of tissue distribution, expressed at high levels in root, stem, leaf and flower.

The protein resides in the cell membrane. The catalysed reaction is ATP + H2O + H(+)(in) = ADP + phosphate + 2 H(+)(out). Its function is as follows. The plasma membrane ATPase of plants and fungi is a hydrogen ion pump. The proton gradient it generates drives the active transport of nutrients by H(+)-symport. The resulting external acidification and/or internal alkinization may mediate growth responses. The chain is Plasma membrane ATPase 4 (PMA4) from Nicotiana plumbaginifolia (Leadwort-leaved tobacco).